A 230-amino-acid polypeptide reads, in one-letter code: Large ribosomal subunit protein uL1 (230 aa).

Belongs to the universal ribosomal protein uL1 family. In terms of assembly, part of the 50S ribosomal subunit.

Binds directly to 23S rRNA. The L1 stalk is quite mobile in the ribosome, and is involved in E site tRNA release. In terms of biological role, protein L1 is also a translational repressor protein, it controls the translation of the L11 operon by binding to its mRNA. The protein is Large ribosomal subunit protein uL1 of Methylobacillus flagellatus (strain ATCC 51484 / DSM 6875 / VKM B-1610 / KT).